The sequence spans 83 residues: Defensin-like protein 47 (83 aa).

The signal sequence occupies residues 1 to 27; that stretch reads MGSTKTLVTCFLVIILAVSLPNNNVLA. 4 disulfide bridges follow: Cys40-Cys81, Cys44-Cys68, Cys53-Cys79, and Cys57-Cys80.

This sequence belongs to the DEFL family.

The protein resides in the secreted. This is Defensin-like protein 47 from Arabidopsis thaliana (Mouse-ear cress).